Reading from the N-terminus, the 371-residue chain is Chaperone protein DnaJ (371 aa).

Positions aspartate 5–glycine 69 constitute a J domain. Residues glycine 127–proline 205 form a CR-type zinc finger. Positions 140, 143, 157, 160, 179, 182, 193, and 196 each coordinate Zn(2+). 4 CXXCXGXG motif repeats span residues cysteine 140–glycine 147, cysteine 157–glycine 164, cysteine 179–glycine 186, and cysteine 193–glycine 200.

This sequence belongs to the DnaJ family. In terms of assembly, homodimer. Zn(2+) is required as a cofactor.

Its subcellular location is the cytoplasm. Functionally, participates actively in the response to hyperosmotic and heat shock by preventing the aggregation of stress-denatured proteins and by disaggregating proteins, also in an autonomous, DnaK-independent fashion. Unfolded proteins bind initially to DnaJ; upon interaction with the DnaJ-bound protein, DnaK hydrolyzes its bound ATP, resulting in the formation of a stable complex. GrpE releases ADP from DnaK; ATP binding to DnaK triggers the release of the substrate protein, thus completing the reaction cycle. Several rounds of ATP-dependent interactions between DnaJ, DnaK and GrpE are required for fully efficient folding. Also involved, together with DnaK and GrpE, in the DNA replication of plasmids through activation of initiation proteins. The polypeptide is Chaperone protein DnaJ (Hamiltonella defensa subsp. Acyrthosiphon pisum (strain 5AT)).